The primary structure comprises 483 residues: Iron-sulfur cluster assembly SufBD family protein ycf24 (483 aa).

Belongs to the iron-sulfur cluster assembly SufBD family.

The protein localises to the plastid. It is found in the chloroplast. In Guillardia theta (Cryptophyte), this protein is Iron-sulfur cluster assembly SufBD family protein ycf24 (ycf24).